The chain runs to 397 residues: Elongation factor Tu (397 aa).

Residues 10–207 enclose the tr-type G domain; the sequence is KPHVNIGTIG…ACDSYIPEPQ (198 aa). The tract at residues 19 to 26 is G1; that stretch reads GHIDHGKT. 19–26 is a GTP binding site; that stretch reads GHIDHGKT. Thr-26 contributes to the Mg(2+) binding site. The interval 60 to 64 is G2; it reads GITIA. The G3 stretch occupies residues 81-84; the sequence is DCPG. GTP-binding positions include 81-85 and 136-139; these read DCPGH and NKCD. Residues 136–139 are G4; sequence NKCD. The tract at residues 174 to 176 is G5; it reads SAL.

It belongs to the TRAFAC class translation factor GTPase superfamily. Classic translation factor GTPase family. EF-Tu/EF-1A subfamily. Monomer.

Its subcellular location is the cytoplasm. The enzyme catalyses GTP + H2O = GDP + phosphate + H(+). In terms of biological role, GTP hydrolase that promotes the GTP-dependent binding of aminoacyl-tRNA to the A-site of ribosomes during protein biosynthesis. This Nitratidesulfovibrio vulgaris (strain ATCC 29579 / DSM 644 / CCUG 34227 / NCIMB 8303 / VKM B-1760 / Hildenborough) (Desulfovibrio vulgaris) protein is Elongation factor Tu.